A 72-amino-acid polypeptide reads, in one-letter code: NAD(P)H-quinone oxidoreductase subunit O (72 aa).

Belongs to the complex I NdhO subunit family. NDH-1 can be composed of about 15 different subunits; different subcomplexes with different compositions have been identified which probably have different functions.

The protein localises to the cellular thylakoid membrane. The catalysed reaction is a plastoquinone + NADH + (n+1) H(+)(in) = a plastoquinol + NAD(+) + n H(+)(out). The enzyme catalyses a plastoquinone + NADPH + (n+1) H(+)(in) = a plastoquinol + NADP(+) + n H(+)(out). Its function is as follows. NDH-1 shuttles electrons from an unknown electron donor, via FMN and iron-sulfur (Fe-S) centers, to quinones in the respiratory and/or the photosynthetic chain. The immediate electron acceptor for the enzyme in this species is believed to be plastoquinone. Couples the redox reaction to proton translocation, and thus conserves the redox energy in a proton gradient. Cyanobacterial NDH-1 also plays a role in inorganic carbon-concentration. In Rippkaea orientalis (strain PCC 8801 / RF-1) (Cyanothece sp. (strain PCC 8801)), this protein is NAD(P)H-quinone oxidoreductase subunit O.